Here is a 209-residue protein sequence, read N- to C-terminus: MNNMKTFKFLTALFATAILTACTLDMERPTNVQYIDKTDAIWQQHLQKIQKIQSYQAKGQIGYISPTERFSSRFEWQYQNPKSYTLKLYSLISKSTLLIQMHQSGMTISDNNDNQQSAANAKLLLQEIIGMDVPLEHLAYWLKGQPAMNADYQVGTNHLLGAFTYHVDGSQWTADYLTYHSNNSMPENILLKNDSTKQTLKIRVDEWIY.

The N-terminal stretch at 1-21 (MNNMKTFKFLTALFATAILTA) is a signal peptide. Residue Cys-22 is the site of N-palmitoyl cysteine attachment. The S-diacylglycerol cysteine moiety is linked to residue Cys-22.

The protein belongs to the LolB family. As to quaternary structure, monomer.

The protein localises to the cell outer membrane. Its function is as follows. Plays a critical role in the incorporation of lipoproteins in the outer membrane after they are released by the LolA protein. The protein is Outer-membrane lipoprotein LolB of Haemophilus influenzae (strain 86-028NP).